Consider the following 223-residue polypeptide: Noggin (223 aa).

The signal sequence occupies residues 1–26 (MDHSQCLVTIYAAAVLLGLRLQQGSC). The N-linked (GlcNAc...) asparagine glycan is linked to Asn61. 4 cysteine pairs are disulfide-bonded: Cys146/Cys183, Cys169/Cys219, Cys175/Cys221, and Cys198/Cys206.

It belongs to the noggin family. Homodimer.

The protein localises to the secreted. Its function is as follows. Inhibitor of bone morphogenetic proteins (BMP) signaling. Controls somitogenesis by sequestering the BMP-4 activity which in turn differentiates distinct subtypes of the mesoderm along the mediolateral axis. This Gallus gallus (Chicken) protein is Noggin (NOG).